Consider the following 581-residue polypeptide: Estrogen receptor (581 aa).

The tract at residues 1–144 is modulating; sequence MYPEDSRGSG…GFEIAKEMRF (144 aa). Disordered regions lie at residues 45 to 66 and 96 to 122; these read APLD…SGPN and PVYR…DDSY. Over residues 56–66 the composition is skewed to polar residues; that stretch reads GSLQSLGSGPN. Residues 100 to 109 are compositionally biased toward low complexity; it reads SSVPSSQQSV. 2 consecutive NR C4-type zinc fingers follow at residues 145–165 and 181–205; these read CAVC…CEGC and CPAT…LRKC. The nuclear receptor DNA-binding region spans 145–210; the sequence is CAVCSDYASG…RLRKCYEVGM (66 aa). A hinge region spans residues 211–272; sequence MKGGMRKDRG…GGGKSSMISM (62 aa). Over residues 216–246 the composition is skewed to basic and acidic residues; it reads RKDRGRVLRRDKQRTGTSDRDKASKGLEHRT. A disordered region spans residues 216–268; the sequence is RKDRGRVLRRDKQRTGTSDRDKASKGLEHRTAPPQDRRKHISSSAGGGGGKSS. In terms of domain architecture, NR LBD spans 273 to 509; sequence PPDQVLLLLQ…DLLLEMLDAH (237 aa). A compositionally biased stretch (basic and acidic residues) spans 516–528; the sequence is RPAETWSQADREP. The tract at residues 516-581 is disordered; sequence RPAETWSQAD…GSRSECTHIL (66 aa). Gly residues predominate over residues 536-547; that stretch reads SGGGGGGGGGSS.

This sequence belongs to the nuclear hormone receptor family. NR3 subfamily. As to quaternary structure, binds DNA as a homodimer. Can form a heterodimer with ER-beta.

Its subcellular location is the nucleus. Its function is as follows. The steroid hormones and their receptors are involved in the regulation of eukaryotic gene expression and affect cellular proliferation and differentiation in target tissues. The protein is Estrogen receptor (esr1) of Pagrus major (Red sea bream).